The sequence spans 353 residues: Protein U67 (353 aa).

This sequence belongs to the herpesviridae UL95 family.

This is Protein U67 (U67) from Human herpesvirus 6A (strain Uganda-1102) (HHV-6 variant A).